The primary structure comprises 55 residues: Mitochondrial import receptor subunit TOM7 homolog (55 aa).

The Cytoplasmic portion of the chain corresponds to 1–20 (MVKLSKEAKQRLQQLFKGGQ). A helical transmembrane segment spans residues 21–40 (FAIRWGFIPLVIYLGFTRGA). The Mitochondrial intermembrane portion of the chain corresponds to 41-55 (DPGMPEPSVLSLLWG).

This sequence belongs to the Tom7 family. Forms part of the preprotein translocase complex of the outer mitochondrial membrane (TOM complex) which consists of at least 7 different proteins (TOMM5, TOMM6, TOMM7, TOMM20, TOMM22, TOMM40 and TOMM70).

The protein localises to the mitochondrion outer membrane. In terms of biological role, required for assembly and stability of the TOM complex. Positive regulator of PRKN translocation to damaged mitochondria. Acts probably by stabilizing PINK1 on the outer membrane of depolarized mitochondria. The sequence is that of Mitochondrial import receptor subunit TOM7 homolog (Tomm7) from Mus musculus (Mouse).